The following is a 673-amino-acid chain: Kinesin-like protein KIFC1 (673 aa).

Residues Ser-6, Ser-26, Ser-31, and Ser-33 each carry the phosphoserine modification. 2 disordered regions span residues Lys-23–Arg-94 and Val-109–Ala-136. Positions Thr-60 to Lys-86 are enriched in polar residues. Residues Gln-142–Glu-306 are a coiled coil. In terms of domain architecture, Kinesin motor spans Asn-310–Cys-663. The segment at Pro-325–Phe-372 is disordered. A Phosphothreonine modification is found at Thr-359. Gly-410 to Thr-417 lines the ATP pocket.

This sequence belongs to the TRAFAC class myosin-kinesin ATPase superfamily. Kinesin family. NCD subfamily. As to quaternary structure, binds NUBP1 and NUBP2. Interacts with PPP1R42.

It is found in the nucleus. The protein localises to the cytoplasm. Its subcellular location is the cytoskeleton. The protein resides in the microtubule organizing center. It localises to the centrosome. It is found in the spindle. The protein localises to the early endosome. Its function is as follows. Minus end-directed microtubule-dependent motor required for bipolar spindle formation. May contribute to movement of early endocytic vesicles. Regulates cilium formation and structure. This chain is Kinesin-like protein KIFC1 (KIFC1), found in Homo sapiens (Human).